Reading from the N-terminus, the 319-residue chain is ADP-L-glycero-D-manno-heptose-6-epimerase (319 aa).

NADP(+)-binding positions include 10–11 (FI), 31–32 (DD), Lys38, Lys53, and 79–83 (EGACS). The active-site Proton acceptor is the Tyr144. An NADP(+)-binding site is contributed by Lys148. Asn173 is a binding site for substrate. Positions 174 and 182 each coordinate NADP(+). Lys182 (proton acceptor) is an active-site residue. Residues Ser184, His191, 205-208 (FEGC), Arg218, and Tyr282 each bind substrate.

The protein belongs to the NAD(P)-dependent epimerase/dehydratase family. HldD subfamily. As to quaternary structure, homopentamer. Requires NADP(+) as cofactor.

It carries out the reaction ADP-D-glycero-beta-D-manno-heptose = ADP-L-glycero-beta-D-manno-heptose. It functions in the pathway nucleotide-sugar biosynthesis; ADP-L-glycero-beta-D-manno-heptose biosynthesis; ADP-L-glycero-beta-D-manno-heptose from D-glycero-beta-D-manno-heptose 7-phosphate: step 4/4. Its function is as follows. Catalyzes the interconversion between ADP-D-glycero-beta-D-manno-heptose and ADP-L-glycero-beta-D-manno-heptose via an epimerization at carbon 6 of the heptose. This Aeromonas salmonicida (strain A449) protein is ADP-L-glycero-D-manno-heptose-6-epimerase.